A 425-amino-acid polypeptide reads, in one-letter code: UBX domain-containing protein 4 (425 aa).

The disordered stretch occupies residues 224 to 257 (TPIPSLPSTPSSYQNLPSQSLTGESLPTVSNQEK). Residues 236 to 254 (YQNLPSQSLTGESLPTVSN) are compositionally biased toward polar residues. A Phosphoserine modification is found at serine 338. Positions 341–390 (PLPSSAIVKFDFGNGKSIVHEFSKDDNIETLRAFVASHLSPEESTSFQLT) constitute a UBX domain.

It localises to the cytoplasm. The protein resides in the nucleus. In terms of biological role, involved in CDC48-dependent protein degradation through the ubiquitin/proteasome pathway. In Schizosaccharomyces pombe (strain 972 / ATCC 24843) (Fission yeast), this protein is UBX domain-containing protein 4 (ubx4).